Here is a 706-residue protein sequence, read N- to C-terminus: Centrosomal protein kizuna (706 aa).

The stretch at 63–113 forms a coiled coil; it reads QRAKTRNLELLGNVENLASKLKEFSIDCSRLLQKRMEYKNHITRLKKDRRK. A compositionally biased stretch (basic residues) spans 105 to 116; sequence TRLKKDRRKMGS. 5 disordered regions span residues 105-184, 215-347, 571-603, 620-665, and 677-706; these read TRLK…LCMH, VREK…ASRG, EIKP…QSPV, SVAQ…KTKP, and ESDD…DFYD. Over residues 118-127 the composition is skewed to basic and acidic residues; the sequence is GKSEADEHPS. 2 stretches are compositionally biased toward polar residues: residues 128-156 and 164-180; these read RLST…NDGA and HTEQ…SQSG. Residues 215–251 are compositionally biased toward basic and acidic residues; it reads VREKQMESDWDISQRAREQQRQEELKSPHTTLKEAEV. Residues 272–283 show a composition bias toward low complexity; that stretch reads TRSPSPDTTDPS. Over residues 293-304 the composition is skewed to acidic residues; it reads GEDEEESAEDKD. The span at 308–320 shows a compositional bias: polar residues; the sequence is PINQNHSDYTSNI. The span at 586–598 shows a compositional bias: acidic residues; that stretch reads EEQEIQSAEEDSA. Positions 638–648 are enriched in basic and acidic residues; that stretch reads PDAHKLEKPEV.

Belongs to the kizuna family.

It localises to the cytoplasm. The protein resides in the cytoskeleton. The protein localises to the microtubule organizing center. It is found in the centrosome. Its subcellular location is the cilium basal body. Its function is as follows. Centrosomal protein required for establishing a robust mitotic centrosome architecture that can endure the forces that converge on the centrosomes during spindle formation. Required for stabilizing the expanded pericentriolar material around the centriole. This Danio rerio (Zebrafish) protein is Centrosomal protein kizuna (kiz).